The primary structure comprises 178 residues: Dual-action ribosomal maturation protein DarP (178 aa).

The protein belongs to the DarP family.

The protein resides in the cytoplasm. Member of a network of 50S ribosomal subunit biogenesis factors which assembles along the 30S-50S interface, preventing incorrect 23S rRNA structures from forming. Promotes peptidyl transferase center (PTC) maturation. This is Dual-action ribosomal maturation protein DarP from Haemophilus influenzae (strain 86-028NP).